The following is a 190-amino-acid chain: Threonylcarbamoyl-AMP synthase (190 aa).

Positions Ser7–Gly190 constitute a YrdC-like domain.

This sequence belongs to the SUA5 family. TsaC subfamily.

The protein localises to the cytoplasm. The catalysed reaction is L-threonine + hydrogencarbonate + ATP = L-threonylcarbamoyladenylate + diphosphate + H2O. In terms of biological role, required for the formation of a threonylcarbamoyl group on adenosine at position 37 (t(6)A37) in tRNAs that read codons beginning with adenine. Catalyzes the conversion of L-threonine, HCO(3)(-)/CO(2) and ATP to give threonylcarbamoyl-AMP (TC-AMP) as the acyladenylate intermediate, with the release of diphosphate. The protein is Threonylcarbamoyl-AMP synthase of Sodalis glossinidius (strain morsitans).